We begin with the raw amino-acid sequence, 750 residues long: Glutamate carboxypeptidase 2 (750 aa).

The Cytoplasmic segment spans residues 1 to 19 (MWNLLHETDSAVATARRPR). At Ser-10 the chain carries Phosphoserine. Residues 20–43 (WLCAGALVLAGGFFLLGFLFGWFI) traverse the membrane as a helical; Signal-anchor for type II membrane protein segment. Residues 44–750 (KSSNEATNIT…AAAETLSEVA (707 aa)) lie on the Extracellular side of the membrane. N-linked (GlcNAc...) asparagine glycans are attached at residues Asn-51, Asn-76, Asn-121, Asn-140, Asn-153, and Asn-195. Substrate is bound by residues Arg-210 and Asn-257. 2 residues coordinate Ca(2+): Thr-269 and Tyr-272. The tract at residues 274–587 (ANEYAYRRGI…QVRGGMVFEL (314 aa)) is NAALADase. The N-linked (GlcNAc...) asparagine glycan is linked to Asn-336. Zn(2+) is bound by residues His-377 and Asp-387. Glu-424 contributes to the substrate binding site. The active-site Nucleophile; for NAALADase activity is Glu-424. Glu-425 contacts Zn(2+). Residues Glu-433 and Glu-436 each coordinate Ca(2+). Zn(2+) is bound at residue Asp-453. Asn-459 and Asn-476 each carry an N-linked (GlcNAc...) asparagine glycan. Substrate is bound by residues 517-518 (SG), Asn-519, 534-536 (RAR), Tyr-552, and 552-553 (YH). His-553 is a Zn(2+) binding site. Ser-628 functions as the Charge relay system in the catalytic mechanism. The N-linked (GlcNAc...) asparagine glycan is linked to Asn-638. Active-site charge relay system residues include Asp-666 and His-689. 699–700 (KY) contacts substrate.

This sequence belongs to the peptidase M28 family. M28B subfamily. As to quaternary structure, homodimer. Zn(2+) serves as cofactor. Post-translationally, the first two amino acids at the N-terminus of isoform PSMA' appear to be cleaved by limited proteolysis. In terms of processing, the N-terminus is blocked. Highly expressed in prostate epithelium. Detected in urinary bladder, kidney, testis, ovary, fallopian tube, breast, adrenal gland, liver, esophagus, stomach, small intestine, colon and brain (at protein level). Detected in the small intestine, brain, kidney, liver, spleen, colon, trachea, spinal cord and the capillary endothelium of a variety of tumors. Expressed specifically in jejunum brush border membranes. In the brain, highly expressed in the ventral striatum and brain stem. Also expressed in fetal liver and kidney. Isoform PSMA' is the most abundant form in normal prostate. Isoform PSMA-1 is the most abundant form in primary prostate tumors. Isoform PSMA-9 is specifically expressed in prostate cancer.

The protein resides in the cell membrane. Its subcellular location is the cytoplasm. The enzyme catalyses Release of an unsubstituted, C-terminal glutamyl residue, typically from Ac-Asp-Glu or folylpoly-gamma-glutamates.. With respect to regulation, the NAALADase activity is inhibited by beta-NAAG, quisqualic acid, 2-(phosphonomethyl) pentanedioic acid (PMPA) and EDTA. Activated by cobalt. Its function is as follows. Has both folate hydrolase and N-acetylated-alpha-linked-acidic dipeptidase (NAALADase) activity. Has a preference for tri-alpha-glutamate peptides. In the intestine, required for the uptake of folate. In the brain, modulates excitatory neurotransmission through the hydrolysis of the neuropeptide, N-aceylaspartylglutamate (NAAG), thereby releasing glutamate. Involved in prostate tumor progression. Also exhibits a dipeptidyl-peptidase IV type activity. In vitro, cleaves Gly-Pro-AMC. The chain is Glutamate carboxypeptidase 2 from Homo sapiens (Human).